The chain runs to 520 residues: Anthranilate synthase component 1 (520 aa).

Residues Ser40 and 291 to 293 (PYM) contribute to the L-tryptophan site. Residue 328–329 (GT) coordinates chorismate. Glu361 lines the Mg(2+) pocket. Chorismate is bound by residues Tyr449, Arg469, 483 to 485 (GAG), and Gly485. Glu498 contributes to the Mg(2+) binding site.

This sequence belongs to the anthranilate synthase component I family. Heterotetramer consisting of two non-identical subunits: a beta subunit (TrpG) and a large alpha subunit (TrpE). It depends on Mg(2+) as a cofactor.

It catalyses the reaction chorismate + L-glutamine = anthranilate + pyruvate + L-glutamate + H(+). The protein operates within amino-acid biosynthesis; L-tryptophan biosynthesis; L-tryptophan from chorismate: step 1/5. With respect to regulation, feedback inhibited by tryptophan. Functionally, part of a heterotetrameric complex that catalyzes the two-step biosynthesis of anthranilate, an intermediate in the biosynthesis of L-tryptophan. In the first step, the glutamine-binding beta subunit (TrpG) of anthranilate synthase (AS) provides the glutamine amidotransferase activity which generates ammonia as a substrate that, along with chorismate, is used in the second step, catalyzed by the large alpha subunit of AS (TrpE) to produce anthranilate. In the absence of TrpG, TrpE can synthesize anthranilate directly from chorismate and high concentrations of ammonia. This chain is Anthranilate synthase component 1 (trpE), found in Buchnera aphidicola subsp. Pemphigus spyrothecae.